Here is a 273-residue protein sequence, read N- to C-terminus: UPF0380 protein YfjQ (273 aa).

The protein belongs to the UPF0380 family.

The sequence is that of UPF0380 protein YfjQ (yfjQ) from Escherichia coli (strain K12).